We begin with the raw amino-acid sequence, 138 residues long: Phosphoribosyl-AMP cyclohydrolase (138 aa).

Asp-84 is a binding site for Mg(2+). Residue Cys-85 coordinates Zn(2+). Positions 86 and 88 each coordinate Mg(2+). The Zn(2+) site is built by Cys-102 and Cys-109.

Belongs to the PRA-CH family. Homodimer. Mg(2+) serves as cofactor. Zn(2+) is required as a cofactor.

The protein localises to the cytoplasm. It catalyses the reaction 1-(5-phospho-beta-D-ribosyl)-5'-AMP + H2O = 1-(5-phospho-beta-D-ribosyl)-5-[(5-phospho-beta-D-ribosylamino)methylideneamino]imidazole-4-carboxamide. It functions in the pathway amino-acid biosynthesis; L-histidine biosynthesis; L-histidine from 5-phospho-alpha-D-ribose 1-diphosphate: step 3/9. Its function is as follows. Catalyzes the hydrolysis of the adenine ring of phosphoribosyl-AMP. The sequence is that of Phosphoribosyl-AMP cyclohydrolase from Burkholderia vietnamiensis (strain G4 / LMG 22486) (Burkholderia cepacia (strain R1808)).